The chain runs to 400 residues: MMNIHSVKGQKIAAGERTQEVDHPHSLVAQFGADQPLPLDCGIELSPFQIAYQTYGTLNADKSNAILVCHALTMDQHIANVHPITGKPGGWLTLVGPGKPIDTDRYFVICSNVIGGCMGSTGPASINPATGKAWGLDFPVITIPDMVRAQAMLIDRFGIDKLFCVVGGSMGGMQVLQWSVAFPERVFSALAIACATRHSAQNIAFHELGRQAVMADPDWQHGRYFEHGCFPHRGLAVARMAAHITYLSDAALHRKFGRKMQDRELPTFSFDADFQVESYLRYQGSSFVERFDANSYLYLTRAMDYFDIAADHDGVLAAAFRGTQTRFCVVSFTSDWLFPTSESRAIVHALNAGGARVSFAEIVTDKGHDAFLLDEPEFIDIARAFLQSAGTARGLGKAEH.

The AB hydrolase-1 domain maps to 64–374 (NAILVCHALT…DKGHDAFLLD (311 aa)). Residue serine 169 is the Nucleophile of the active site. Position 239 (arginine 239) interacts with substrate. Residues aspartate 335 and histidine 368 contribute to the active site. Aspartate 369 serves as a coordination point for substrate.

The protein belongs to the AB hydrolase superfamily. MetX family. Homodimer.

Its subcellular location is the cytoplasm. The catalysed reaction is L-homoserine + acetyl-CoA = O-acetyl-L-homoserine + CoA. The protein operates within amino-acid biosynthesis; L-methionine biosynthesis via de novo pathway; O-acetyl-L-homoserine from L-homoserine: step 1/1. In terms of biological role, transfers an acetyl group from acetyl-CoA to L-homoserine, forming acetyl-L-homoserine. In Rhodopseudomonas palustris (strain ATCC BAA-98 / CGA009), this protein is Homoserine O-acetyltransferase.